Reading from the N-terminus, the 269-residue chain is 2-dehydro-3-deoxyphosphooctonate aldolase (269 aa).

This sequence belongs to the KdsA family.

The protein localises to the cytoplasm. It carries out the reaction D-arabinose 5-phosphate + phosphoenolpyruvate + H2O = 3-deoxy-alpha-D-manno-2-octulosonate-8-phosphate + phosphate. Its pathway is carbohydrate biosynthesis; 3-deoxy-D-manno-octulosonate biosynthesis; 3-deoxy-D-manno-octulosonate from D-ribulose 5-phosphate: step 2/3. It functions in the pathway bacterial outer membrane biogenesis; lipopolysaccharide biosynthesis. The polypeptide is 2-dehydro-3-deoxyphosphooctonate aldolase (Chlamydia trachomatis serovar L2 (strain ATCC VR-902B / DSM 19102 / 434/Bu)).